The sequence spans 172 residues: uncharacterized protein (172 aa).

2 disordered regions span residues 1 to 54 and 82 to 111; these read MPRR…GGSS and ITGG…SVPE. Positions 14 to 29 are enriched in low complexity; sequence AAPARSASTAAALPPR. Pro residues predominate over residues 30–47; the sequence is TMAPPPAPSRVQQAPPPT. The span at 89–109 shows a compositional bias: polar residues; it reads SGSNNAPADTSVPQSSYSNSV.

This is an uncharacterized protein from Schizosaccharomyces pombe (strain 972 / ATCC 24843) (Fission yeast).